A 427-amino-acid chain; its full sequence is 3-phosphoshikimate 1-carboxyvinyltransferase (427 aa).

3-phosphoshikimate contacts are provided by lysine 20, serine 21, and arginine 25. Position 20 (lysine 20) interacts with phosphoenolpyruvate. The phosphoenolpyruvate site is built by glycine 92 and arginine 120. Positions 166, 168, 312, and 339 each coordinate 3-phosphoshikimate. Residue glutamine 168 participates in phosphoenolpyruvate binding. Aspartate 312 serves as the catalytic Proton acceptor. Phosphoenolpyruvate-binding residues include arginine 343 and arginine 385.

The protein belongs to the EPSP synthase family. As to quaternary structure, monomer.

The protein localises to the cytoplasm. It catalyses the reaction 3-phosphoshikimate + phosphoenolpyruvate = 5-O-(1-carboxyvinyl)-3-phosphoshikimate + phosphate. Its pathway is metabolic intermediate biosynthesis; chorismate biosynthesis; chorismate from D-erythrose 4-phosphate and phosphoenolpyruvate: step 6/7. Its function is as follows. Catalyzes the transfer of the enolpyruvyl moiety of phosphoenolpyruvate (PEP) to the 5-hydroxyl of shikimate-3-phosphate (S3P) to produce enolpyruvyl shikimate-3-phosphate and inorganic phosphate. This is 3-phosphoshikimate 1-carboxyvinyltransferase from Streptococcus agalactiae serotype III (strain NEM316).